We begin with the raw amino-acid sequence, 60 residues long: Cytotoxin 6 (60 aa).

Intrachain disulfides connect Cys3-Cys21, Cys14-Cys38, Cys42-Cys53, and Cys54-Cys59.

It belongs to the three-finger toxin family. Short-chain subfamily. Type IA cytotoxin sub-subfamily. Monomer in solution; Homodimer and oligomer in the presence of negatively charged lipids forming a pore with a size ranging between 20 and 30 Angstroms. As to expression, expressed by the venom gland.

Its subcellular location is the secreted. The protein resides in the target cell membrane. Its function is as follows. Shows cytolytic activity on many different cells by forming pore in lipid membranes. In vivo, increases heart rate or kills the animal by cardiac arrest. In addition, it binds to heparin with high affinity, interacts with Kv channel-interacting protein 1 (KCNIP1) in a calcium-independent manner, and binds to integrin alpha-V/beta-3 (ITGAV/ITGB3) with moderate affinity. The polypeptide is Cytotoxin 6 (Naja annulifera (Banded Egyptian cobra)).